The following is a 435-amino-acid chain: 3-phosphoshikimate 1-carboxyvinyltransferase (435 aa).

Residues lysine 28, serine 29, and arginine 33 each contribute to the 3-phosphoshikimate site. Residue lysine 28 participates in phosphoenolpyruvate binding. Residues glycine 100 and arginine 128 each coordinate phosphoenolpyruvate. 3-phosphoshikimate contacts are provided by serine 173, glutamine 175, aspartate 321, and lysine 348. Glutamine 175 is a binding site for phosphoenolpyruvate. The active-site Proton acceptor is aspartate 321. Phosphoenolpyruvate contacts are provided by arginine 352 and arginine 394.

This sequence belongs to the EPSP synthase family. As to quaternary structure, monomer.

The protein resides in the cytoplasm. It carries out the reaction 3-phosphoshikimate + phosphoenolpyruvate = 5-O-(1-carboxyvinyl)-3-phosphoshikimate + phosphate. It participates in metabolic intermediate biosynthesis; chorismate biosynthesis; chorismate from D-erythrose 4-phosphate and phosphoenolpyruvate: step 6/7. In terms of biological role, catalyzes the transfer of the enolpyruvyl moiety of phosphoenolpyruvate (PEP) to the 5-hydroxyl of shikimate-3-phosphate (S3P) to produce enolpyruvyl shikimate-3-phosphate and inorganic phosphate. The chain is 3-phosphoshikimate 1-carboxyvinyltransferase from Desulfitobacterium hafniense (strain DSM 10664 / DCB-2).